The chain runs to 951 residues: MEKTYNPQDIEQPLYEHWEKQGYFKPNGDESQESFCIMIPPPNVTGSLHMGHAFQQTIMDTMIRYQRMQGKNTLWQVGTDHAGIATQMVVERKIAAEEGKTRHDYGREAFIDKIWEWKAESGGTITRQMRRLGNSVDWERERFTMDEGLSNAVKEVFVRLYKEDLIYRGKRLVNWDPKLRTAISDLEVENRESKGSMWHIRYPLADGAKTADGKDYLVVATTRPETLLGDTGVAVNPEDPRYKDLIGKYVILPLVNRRIPIVGDEHADMEKGTGCVKITPAHDFNDYEVGKRHALPMINILTFDGDIRESAQVFDTKGNESDVYSSEIPAEFQKLERFAARKAVVAAVDALGLLEEIKPHDLTVPYGDRGGVVIEPMLTDQWYVRADVLAKPAVEAVENGDIQFVPKQYENMYFSWMRDIQDWCISRQLWWGHRIPAWYDEAGNVYVGRNEDEVRKENNLGADVVLRQDEDVLDTWFSSALWTFSTLGWPENTDALRQFHPTSVMVSGFDIIFFWIARMIMMTMHFIKDENGKPQVPFHTVYMTGLIRDDEGQKMSKSKGNVIDPLDMVDGISLPELLEKRTGNMMQPQLADKIRKRTEKQFPNGIEPHGTDALRFTLAALASTGRDINWDMKRLEGYRNFCNKLWNASRFVLMNTEGQDCGFNGGEMTLSLADRWILAEFNQTIKAYREALDSFRFDIAAGILYEFTWNQFCDWYLELTKPVMNGGTEAELRGTRHTLVTVLEGLLRLAHPIIPFITETIWQRVKVLCGITADTIMLQPFPQYDASQVDEAALADTEWLKQAIVAVRNIRAEMNIAPGKPLELLLRGCSADAERRVNENRGFLQTLARLESITVLPADDKGPVSVTKIIDGAELLIPMAGLINKEDELARLAKEVAKIEGEISRIENKLANEGFVARAPEAVIAKEREKLEGYAEAKAKLIEQQAVIAAL.

The 'HIGH' region signature appears at 42 to 52 (PNVTGSLHMGH). A 'KMSKS' region motif is present at residues 554 to 558 (KMSKS). Lysine 557 lines the ATP pocket. A coiled-coil region spans residues 880–944 (AGLINKEDEL…AEAKAKLIEQ (65 aa)).

This sequence belongs to the class-I aminoacyl-tRNA synthetase family. ValS type 1 subfamily. In terms of assembly, monomer.

The protein localises to the cytoplasm. The catalysed reaction is tRNA(Val) + L-valine + ATP = L-valyl-tRNA(Val) + AMP + diphosphate. Catalyzes the attachment of valine to tRNA(Val). As ValRS can inadvertently accommodate and process structurally similar amino acids such as threonine, to avoid such errors, it has a 'posttransfer' editing activity that hydrolyzes mischarged Thr-tRNA(Val) in a tRNA-dependent manner. In Escherichia coli (strain K12), this protein is Valine--tRNA ligase (valS).